The chain runs to 272 residues: MTTLACQKLAPHPESPRHQHAGPWLVWLHGLLGSGQDWLPVAQLCGDYPSLLIDLPGHGQSVSLSADGFADISRQLSQTLQANGIREYWLAGYSLGGRIAIYHACYGRHHGLQGLLVEGGNLGLENAELRQARLQQDRQWAQRFRQEPLPQVLDDWYQQAVFADLDPQQREQLVLLRADNHGTAVAEMLEATSLGHQPWLLPALQRLNVPYTYLCGDRDHKFLQLAQQYRLPLHTLARAGHNAHRANPGAFAAQVLAFLSQSSCLPPSSLSR.

The protein belongs to the AB hydrolase superfamily. MenH family. In terms of assembly, monomer.

It carries out the reaction 5-enolpyruvoyl-6-hydroxy-2-succinyl-cyclohex-3-ene-1-carboxylate = (1R,6R)-6-hydroxy-2-succinyl-cyclohexa-2,4-diene-1-carboxylate + pyruvate. It functions in the pathway quinol/quinone metabolism; 1,4-dihydroxy-2-naphthoate biosynthesis; 1,4-dihydroxy-2-naphthoate from chorismate: step 3/7. Its pathway is quinol/quinone metabolism; menaquinone biosynthesis. Functionally, catalyzes a proton abstraction reaction that results in 2,5-elimination of pyruvate from 2-succinyl-5-enolpyruvyl-6-hydroxy-3-cyclohexene-1-carboxylate (SEPHCHC) and the formation of 2-succinyl-6-hydroxy-2,4-cyclohexadiene-1-carboxylate (SHCHC). This chain is 2-succinyl-6-hydroxy-2,4-cyclohexadiene-1-carboxylate synthase, found in Yersinia pseudotuberculosis serotype I (strain IP32953).